We begin with the raw amino-acid sequence, 142 residues long: Hemoglobin subunit alpha-1 (142 aa).

The 141-residue stretch at 2 to 142 (VLSAADKSNV…VSTVLTSKYR (141 aa)) folds into the Globin domain. His59 serves as a coordination point for O2. Residue His88 coordinates heme b.

Belongs to the globin family. As to quaternary structure, heterotetramer of two alpha chains and two beta chains.

Involved in oxygen transport from the lung to the various peripheral tissues. Its function is as follows. Hemopressin acts as an antagonist peptide of the cannabinoid receptor CNR1. Hemopressin-binding efficiently blocks cannabinoid receptor CNR1 and subsequent signaling. This is Hemoglobin subunit alpha-1 (HBA1) from Capra hircus (Goat).